Consider the following 573-residue polypeptide: DNA ligase (573 aa).

Glutamate 250 provides a ligand contact to ATP. Lysine 252 serves as the catalytic N6-AMP-lysine intermediate. Residues arginine 257, arginine 272, glutamate 301, phenylalanine 342, arginine 432, and lysine 438 each coordinate ATP.

This sequence belongs to the ATP-dependent DNA ligase family. The cofactor is Mg(2+).

The catalysed reaction is ATP + (deoxyribonucleotide)n-3'-hydroxyl + 5'-phospho-(deoxyribonucleotide)m = (deoxyribonucleotide)n+m + AMP + diphosphate.. Functionally, DNA ligase that seals nicks in double-stranded DNA during DNA replication, DNA recombination and DNA repair. This Methanococcus maripaludis (strain C7 / ATCC BAA-1331) protein is DNA ligase.